The following is a 344-amino-acid chain: Protein RecA (344 aa).

65–72 (GPESSGKT) is an ATP binding site.

Belongs to the RecA family.

Its subcellular location is the cytoplasm. Its function is as follows. Can catalyze the hydrolysis of ATP in the presence of single-stranded DNA, the ATP-dependent uptake of single-stranded DNA by duplex DNA, and the ATP-dependent hybridization of homologous single-stranded DNAs. It interacts with LexA causing its activation and leading to its autocatalytic cleavage. The chain is Protein RecA from Rubrobacter xylanophilus (strain DSM 9941 / JCM 11954 / NBRC 16129 / PRD-1).